Reading from the N-terminus, the 89-residue chain is Acylphosphatase (89 aa).

The Acylphosphatase-like domain maps to 4-89 (SYIAHISGRV…WQEHHFFSIG (86 aa)). Residues Arg-19 and Asn-37 contribute to the active site.

The protein belongs to the acylphosphatase family.

It catalyses the reaction an acyl phosphate + H2O = a carboxylate + phosphate + H(+). This is Acylphosphatase (acyP) from Colwellia psychrerythraea (strain 34H / ATCC BAA-681) (Vibrio psychroerythus).